Reading from the N-terminus, the 548-residue chain is Fluconazole resistance protein 1 (548 aa).

Residues 30–94 (SAREDETRKP…WNGPSDPENP (65 aa)) are disordered. A compositionally biased stretch (basic and acidic residues) spans 31–51 (AREDETRKPENTDKKECKPDY). The segment covering 60 to 73 (SCSESSTDSDSSGS) has biased composition (low complexity). The next 12 helical transmembrane spans lie at 104 to 124 (LVVF…SIYT), 139 to 159 (VVAT…PIIF), 179 to 199 (FFFM…GLIV), 203 to 223 (ISGI…ADII), 230 to 250 (LVLG…PLLG), 261 to 281 (FIFW…AFFF), 347 to 367 (IAVA…VFVG), 376 to 396 (VGLA…LFGI), 416 to 436 (FLIV…LFGW), 440 to 460 (VHWI…FNIF), 476 to 496 (ASVF…FPLF), and 511 to 531 (VAWG…IPFI).

It belongs to the major facilitator superfamily.

The protein resides in the membrane. Its function is as follows. Probable efflux transporter. Confers resistance to the azole derivative fluconazole (FCZ). In Saccharomyces cerevisiae (strain ATCC 204508 / S288c) (Baker's yeast), this protein is Fluconazole resistance protein 1 (FLR1).